Reading from the N-terminus, the 319-residue chain is 1-aminocyclopropane-1-carboxylate oxidase (319 aa).

Residues 152–253 (GPNFGSKVSN…RMSLASFYNP (102 aa)) enclose the Fe2OG dioxygenase domain. Residues H177, D179, and H234 each contribute to the Fe cation site.

This sequence belongs to the iron/ascorbate-dependent oxidoreductase family. Fe cation is required as a cofactor.

The enzyme catalyses 1-aminocyclopropane-1-carboxylate + L-ascorbate + O2 = ethene + L-dehydroascorbate + hydrogen cyanide + CO2 + 2 H2O. The protein operates within alkene biosynthesis; ethylene biosynthesis via S-adenosyl-L-methionine; ethylene from S-adenosyl-L-methionine: step 2/2. The sequence is that of 1-aminocyclopropane-1-carboxylate oxidase (ACO) from Nicotiana tabacum (Common tobacco).